Here is a 106-residue protein sequence, read N- to C-terminus: Thiosulfate sulfurtransferase GlpE (106 aa).

The region spanning S17–A105 is the Rhodanese domain. Residue C65 is the Cysteine persulfide intermediate of the active site.

The protein belongs to the GlpE family.

It is found in the cytoplasm. It catalyses the reaction thiosulfate + hydrogen cyanide = thiocyanate + sulfite + 2 H(+). The catalysed reaction is thiosulfate + [thioredoxin]-dithiol = [thioredoxin]-disulfide + hydrogen sulfide + sulfite + 2 H(+). Its function is as follows. Transferase that catalyzes the transfer of sulfur from thiosulfate to thiophilic acceptors such as cyanide or dithiols. May function in a CysM-independent thiosulfate assimilation pathway by catalyzing the conversion of thiosulfate to sulfite, which can then be used for L-cysteine biosynthesis. In Vibrio vulnificus (strain CMCP6), this protein is Thiosulfate sulfurtransferase GlpE.